The primary structure comprises 213 residues: A-type ATP synthase subunit D (213 aa).

This sequence belongs to the V-ATPase D subunit family. As to quaternary structure, has multiple subunits with at least A(3), B(3), C, D, E, F, H, I and proteolipid K(x).

Its subcellular location is the cell membrane. Its function is as follows. Component of the A-type ATP synthase that produces ATP from ADP in the presence of a proton gradient across the membrane. In Saccharolobus solfataricus (strain ATCC 35092 / DSM 1617 / JCM 11322 / P2) (Sulfolobus solfataricus), this protein is A-type ATP synthase subunit D.